The chain runs to 727 residues: Non-structural protein 4 (727 aa).

Disordered stretches follow at residues 1–38 (MNQS…PSEG) and 671–727 (GNSM…KLSK). Residues 17–38 (RTPSALSSNSETPGSMSSPSEG) show a composition bias toward polar residues. The span at 712–727 (SRRKARKARAASKLSK) shows a compositional bias: basic residues.

The chain is Non-structural protein 4 from Rice dwarf virus (isolate Fujian) (RDV).